A 547-amino-acid chain; its full sequence is Chaperonin GroEL (547 aa).

Residues 30-33, Lys51, 87-91, Gly415, and Asp495 each bind ATP; these read TLGP and DGTTT.

It belongs to the chaperonin (HSP60) family. Forms a cylinder of 14 subunits composed of two heptameric rings stacked back-to-back. Interacts with the co-chaperonin GroES.

Its subcellular location is the cytoplasm. It carries out the reaction ATP + H2O + a folded polypeptide = ADP + phosphate + an unfolded polypeptide.. In terms of biological role, together with its co-chaperonin GroES, plays an essential role in assisting protein folding. The GroEL-GroES system forms a nano-cage that allows encapsulation of the non-native substrate proteins and provides a physical environment optimized to promote and accelerate protein folding. This chain is Chaperonin GroEL, found in Bartonella quintana (strain Toulouse) (Rochalimaea quintana).